Consider the following 138-residue polypeptide: MAPK kinase substrate protein At1g80180 (138 aa).

The interval 52-138 is disordered; the sequence is TSEVQDQTTK…RKRPAKRRSR (87 aa). Positions 69–81 are enriched in basic and acidic residues; sequence KPIRTDGGMERSR. Serine 98 carries the post-translational modification Phosphoserine. A Phosphoserine; by MAPK6 modification is found at serine 105. Residues 121 to 138 show a composition bias toward basic residues; the sequence is QPGKKVNQRKRPAKRRSR.

In terms of tissue distribution, expressed in developing cotyledons, mature cotyledons, cotyledon epidermis and stomata.

May play a role in the regulation of stomata patterning. This is MAPK kinase substrate protein At1g80180 from Arabidopsis thaliana (Mouse-ear cress).